The chain runs to 234 residues: Phosphoribosylaminoimidazole-succinocarboxamide synthase (234 aa).

This sequence belongs to the SAICAR synthetase family.

The catalysed reaction is 5-amino-1-(5-phospho-D-ribosyl)imidazole-4-carboxylate + L-aspartate + ATP = (2S)-2-[5-amino-1-(5-phospho-beta-D-ribosyl)imidazole-4-carboxamido]succinate + ADP + phosphate + 2 H(+). Its pathway is purine metabolism; IMP biosynthesis via de novo pathway; 5-amino-1-(5-phospho-D-ribosyl)imidazole-4-carboxamide from 5-amino-1-(5-phospho-D-ribosyl)imidazole-4-carboxylate: step 1/2. The chain is Phosphoribosylaminoimidazole-succinocarboxamide synthase from Clostridium botulinum (strain Okra / Type B1).